Consider the following 288-residue polypeptide: Bifunctional protein FolD (288 aa).

NADP(+) is bound by residues 164–166, Ser-193, and Ile-234; that span reads GRS.

This sequence belongs to the tetrahydrofolate dehydrogenase/cyclohydrolase family. Homodimer.

It carries out the reaction (6R)-5,10-methylene-5,6,7,8-tetrahydrofolate + NADP(+) = (6R)-5,10-methenyltetrahydrofolate + NADPH. It catalyses the reaction (6R)-5,10-methenyltetrahydrofolate + H2O = (6R)-10-formyltetrahydrofolate + H(+). The protein operates within one-carbon metabolism; tetrahydrofolate interconversion. In terms of biological role, catalyzes the oxidation of 5,10-methylenetetrahydrofolate to 5,10-methenyltetrahydrofolate and then the hydrolysis of 5,10-methenyltetrahydrofolate to 10-formyltetrahydrofolate. This chain is Bifunctional protein FolD, found in Nitratidesulfovibrio vulgaris (strain DSM 19637 / Miyazaki F) (Desulfovibrio vulgaris).